Consider the following 253-residue polypeptide: Type III pantothenate kinase (253 aa).

ATP is bound at residue 6-13; the sequence is DVGNTNTV. Substrate is bound at residue 103-106; the sequence is GADR. D105 serves as the catalytic Proton acceptor. D125 lines the K(+) pocket. Residue T128 coordinates ATP. T180 serves as a coordination point for substrate.

It belongs to the type III pantothenate kinase family. As to quaternary structure, homodimer. It depends on NH4(+) as a cofactor. K(+) serves as cofactor.

Its subcellular location is the cytoplasm. The enzyme catalyses (R)-pantothenate + ATP = (R)-4'-phosphopantothenate + ADP + H(+). The protein operates within cofactor biosynthesis; coenzyme A biosynthesis; CoA from (R)-pantothenate: step 1/5. In terms of biological role, catalyzes the phosphorylation of pantothenate (Pan), the first step in CoA biosynthesis. This is Type III pantothenate kinase from Parafrankia sp. (strain EAN1pec).